A 379-amino-acid polypeptide reads, in one-letter code: Demethylspheroidene O-methyltransferase (379 aa).

Residues D235 and R279 each contribute to the S-adenosyl-L-methionine site.

Belongs to the class I-like SAM-binding methyltransferase superfamily. Cation-independent O-methyltransferase family.

It carries out the reaction demethylspheroidene + S-adenosyl-L-methionine = spheroidene + S-adenosyl-L-homocysteine + H(+). It participates in carotenoid biosynthesis; spheroidene biosynthesis. Methyltransferase that mediates the O-methylation of 1-hydroxy carotenoids. Converts hydroxyneurosporene to methoxyneurosporene or demethylspheroidene to spheroidene. Also able to produce spirilloxanthin. This is Demethylspheroidene O-methyltransferase (crtF) from Cereibacter sphaeroides (strain ATCC 17023 / DSM 158 / JCM 6121 / CCUG 31486 / LMG 2827 / NBRC 12203 / NCIMB 8253 / ATH 2.4.1.) (Rhodobacter sphaeroides).